A 126-amino-acid chain; its full sequence is Glycine cleavage system H protein (126 aa).

In terms of domain architecture, Lipoyl-binding spans 21-103 (TVTIGISEHA…YEGGWIVKVK (83 aa)). Position 62 is an N6-lipoyllysine (K62).

It belongs to the GcvH family. The glycine cleavage system is composed of four proteins: P, T, L and H. It depends on (R)-lipoate as a cofactor.

In terms of biological role, the glycine cleavage system catalyzes the degradation of glycine. The H protein shuttles the methylamine group of glycine from the P protein to the T protein. This is Glycine cleavage system H protein from Vibrio atlanticus (strain LGP32) (Vibrio splendidus (strain Mel32)).